A 51-amino-acid polypeptide reads, in one-letter code: Insulin (51 aa).

3 cysteine pairs are disulfide-bonded: Cys7–Cys36, Cys19–Cys49, and Cys35–Cys40.

Belongs to the insulin family. Heterodimer of a B chain and an A chain linked by two disulfide bonds.

The protein resides in the secreted. Insulin decreases blood glucose concentration. It increases cell permeability to monosaccharides, amino acids and fatty acids. It accelerates glycolysis, the pentose phosphate cycle, and glycogen synthesis in liver. This chain is Insulin (INS), found in Myocastor coypus (Coypu).